The primary structure comprises 179 residues: MEVLKQKYIQEVVPAMMKKFGYKNPMAVPKIEKIVVNIGVSEAVQNPGAIEAAARDLAIITGQRPIVRKARKSIANFHLRKGMPIGVKVTLRGERMYAFLYKLINLALPRVRDFSGVSPNSFDGRGNYSLGLKEQLVFPEIEYDKIDRIRGMDITIVTTAKTDEEAKELLALLGMPFKK.

Belongs to the universal ribosomal protein uL5 family. In terms of assembly, part of the 50S ribosomal subunit; part of the 5S rRNA/L5/L18/L25 subcomplex. Contacts the 5S rRNA and the P site tRNA. Forms a bridge to the 30S subunit in the 70S ribosome.

Its function is as follows. This is one of the proteins that bind and probably mediate the attachment of the 5S RNA into the large ribosomal subunit, where it forms part of the central protuberance. In the 70S ribosome it contacts protein S13 of the 30S subunit (bridge B1b), connecting the 2 subunits; this bridge is implicated in subunit movement. Contacts the P site tRNA; the 5S rRNA and some of its associated proteins might help stabilize positioning of ribosome-bound tRNAs. This Dictyoglomus thermophilum (strain ATCC 35947 / DSM 3960 / H-6-12) protein is Large ribosomal subunit protein uL5.